A 364-amino-acid polypeptide reads, in one-letter code: Ribosomal RNA large subunit methyltransferase M (364 aa).

S-adenosyl-L-methionine contacts are provided by residues serine 194, 227 to 230, aspartate 246, aspartate 266, and aspartate 284; that span reads CPGG. The active-site Proton acceptor is the lysine 313.

The protein belongs to the class I-like SAM-binding methyltransferase superfamily. RNA methyltransferase RlmE family. RlmM subfamily. Monomer.

The protein resides in the cytoplasm. It carries out the reaction cytidine(2498) in 23S rRNA + S-adenosyl-L-methionine = 2'-O-methylcytidine(2498) in 23S rRNA + S-adenosyl-L-homocysteine + H(+). In terms of biological role, catalyzes the 2'-O-methylation at nucleotide C2498 in 23S rRNA. The sequence is that of Ribosomal RNA large subunit methyltransferase M from Actinobacillus succinogenes (strain ATCC 55618 / DSM 22257 / CCUG 43843 / 130Z).